Consider the following 1086-residue polypeptide: Rh5-interacting protein (1086 aa).

Positions 1 to 19 are cleaved as a signal peptide; that stretch reads MFRIFFTLLIIILIKKTSA. N-linked (GlcNAc...) asparagine glycosylation is found at N103, N144, N228, N303, N334, N480, N498, N506, N526, and N646. 2 EGF-like domains span residues 287 to 321 and 325 to 362; these read RCTQ…NNCE and LCTV…NKCY. EGF-like domains are found at residues 636–675, 679–715, 719–753, 818–854, 858–897, 901–938, and 942–979; these read SCSN…KLCE, DCES…GKCV, KCDL…GVCI, YCKD…GECI, SCLI…GKCV, KCVH…GVCL, and PCLK…DSCV. N-linked (GlcNAc...) asparagine glycans are attached at residues N964 and N1021.

As to quaternary structure, component of the PfRH5 adhesion complex composed of 1 copy of CyRPA, RH5 and RIPR; the complex is formed during merozoite invasion of host erythrocytes specifically at the interface between the parasite and host membranes. Within the complex, interacts with CyRPA. CyRPA recruitment of RIPR to RH5-P113-BSG leads to the formation of the PfRH5 adhesion complex which probably in turn releases RH5 from P113 while maintaining the interaction of the PfRH5 adhesion complex with BSG. Post-translationally, proteolytically cleaved into two chains of 125kDa and 65kDa which remain associated. The cleavage occurs at the schizont stage prior to the release of merozoites. Contains disulfide bonds.

It localises to the secreted. Its subcellular location is the cytoplasmic vesicle. The protein localises to the secretory vesicle. The protein resides in the microneme lumen. It is found in the cell membrane. It localises to the host cell membrane. Functionally, essential for the invasion of host erythrocytes by blood stage merozoites. As part of the PfRH5 adhesion complex, facilitates the interaction of RH5 and human BSG required for the Ca(2+) release into the erythrocyte. The sequence is that of Rh5-interacting protein (RIPR) from Plasmodium falciparum (isolate 3D7).